A 742-amino-acid chain; its full sequence is 5-methyltetrahydropteroyltriglutamate--homocysteine methyltransferase (742 aa).

Residues Arg-18 to Lys-21 and Lys-112 contribute to the 5-methyltetrahydropteroyltri-L-glutamate site. Residues Ile-420 to Ser-422 and Glu-473 contribute to the L-homocysteine site. L-methionine contacts are provided by residues Ile-420–Ser-422 and Glu-473. A 5-methyltetrahydropteroyltri-L-glutamate-binding site is contributed by Trp-550. L-homocysteine is bound at residue Asp-588. Residue Asp-588 participates in L-methionine binding. Glu-594 is a binding site for 5-methyltetrahydropteroyltri-L-glutamate. The Zn(2+) site is built by His-630, Cys-632, and Glu-654. The active-site Proton donor is the His-683. Cys-715 contributes to the Zn(2+) binding site.

This sequence belongs to the vitamin-B12 independent methionine synthase family. It depends on Zn(2+) as a cofactor.

It catalyses the reaction 5-methyltetrahydropteroyltri-L-glutamate + L-homocysteine = tetrahydropteroyltri-L-glutamate + L-methionine. It participates in amino-acid biosynthesis; L-methionine biosynthesis via de novo pathway; L-methionine from L-homocysteine (MetE route): step 1/1. In terms of biological role, catalyzes the transfer of a methyl group from 5-methyltetrahydrofolate to homocysteine resulting in methionine formation. This chain is 5-methyltetrahydropteroyltriglutamate--homocysteine methyltransferase, found in Staphylococcus aureus (strain JH9).